Reading from the N-terminus, the 145-residue chain is D-aminoacyl-tRNA deacylase (145 aa).

Residues 137–138 (GP) carry the Gly-cisPro motif, important for rejection of L-amino acids motif.

This sequence belongs to the DTD family. Homodimer.

It is found in the cytoplasm. The enzyme catalyses glycyl-tRNA(Ala) + H2O = tRNA(Ala) + glycine + H(+). It catalyses the reaction a D-aminoacyl-tRNA + H2O = a tRNA + a D-alpha-amino acid + H(+). In terms of biological role, an aminoacyl-tRNA editing enzyme that deacylates mischarged D-aminoacyl-tRNAs. Also deacylates mischarged glycyl-tRNA(Ala), protecting cells against glycine mischarging by AlaRS. Acts via tRNA-based rather than protein-based catalysis; rejects L-amino acids rather than detecting D-amino acids in the active site. By recycling D-aminoacyl-tRNA to D-amino acids and free tRNA molecules, this enzyme counteracts the toxicity associated with the formation of D-aminoacyl-tRNA entities in vivo and helps enforce protein L-homochirality. This Rhodopirellula baltica (strain DSM 10527 / NCIMB 13988 / SH1) protein is D-aminoacyl-tRNA deacylase.